The sequence spans 270 residues: Very long chain fatty acid elongase 3 (270 aa).

A glycan (N-linked (GlcNAc...) asparagine) is linked at Asn6. 2 consecutive transmembrane segments (helical) span residues 29 to 49 (FFEEYWATSFPIALIYLVLIA) and 63 to 83 (LQGPLILWSFCLAIFSILGAV). Asn110 carries an N-linked (GlcNAc...) asparagine glycan. 5 helical membrane passes run 115-135 (FWSWVFLLSKVIELGDTAFII), 140-160 (PLIFIHWYHHSTVLVYTSFGY), 164-184 (VPAGGWFVTMNFGVHAIMYTY), 198-218 (LPMLITSLQILQMFVGAIVSI), and 235-255 (HLFWSFILYMTYFILFAHFFC). Positions 266-270 (KTKSQ) match the Di-lysine motif motif.

Belongs to the ELO family. ELOVL3 subfamily. In terms of assembly, interacts with TECR. Post-translationally, N-Glycosylated. As to expression, testis.

It is found in the endoplasmic reticulum membrane. It catalyses the reaction a very-long-chain acyl-CoA + malonyl-CoA + H(+) = a very-long-chain 3-oxoacyl-CoA + CO2 + CoA. The enzyme catalyses eicosanoyl-CoA + malonyl-CoA + H(+) = 3-oxodocosanoyl-CoA + CO2 + CoA. It carries out the reaction hexadecanoyl-CoA + malonyl-CoA + H(+) = 3-oxooctadecanoyl-CoA + CO2 + CoA. The catalysed reaction is octadecanoyl-CoA + malonyl-CoA + H(+) = 3-oxoeicosanoyl-CoA + CO2 + CoA. It catalyses the reaction (9Z)-octadecenoyl-CoA + malonyl-CoA + H(+) = 3-oxo-(11Z)-eicosenoyl-CoA + CO2 + CoA. The enzyme catalyses (9Z,12Z)-octadecadienoyl-CoA + malonyl-CoA + H(+) = (11Z,14Z)-3-oxoicosa-11,14-dienoyl-CoA + CO2 + CoA. It carries out the reaction (9Z,12Z,15Z)-octadecatrienoyl-CoA + malonyl-CoA + H(+) = (11Z,14Z,17Z)-3-oxoeicosatrienoyl-CoA + CO2 + CoA. The catalysed reaction is docosanoyl-CoA + malonyl-CoA + H(+) = 3-oxotetracosanoyl-CoA + CO2 + CoA. It catalyses the reaction tetradecanoyl-CoA + malonyl-CoA + H(+) = 3-oxohexadecanoyl-CoA + CO2 + CoA. Its pathway is lipid metabolism; polyunsaturated fatty acid biosynthesis. Its function is as follows. Catalyzes the first and rate-limiting reaction of the four reactions that constitute the long-chain fatty acids elongation cycle. This endoplasmic reticulum-bound enzymatic process allows the addition of 2 carbons to the chain of long- and very long-chain fatty acids (VLCFAs) per cycle. Condensing enzyme that exhibits activity toward saturated and unsaturated acyl-CoA substrates with higher activity toward C18 acyl-CoAs, especially C18:0 acyl-CoAs. May participate in the production of saturated and monounsaturated VLCFAs of different chain lengths that are involved in multiple biological processes as precursors of membrane lipids and lipid mediators. This Homo sapiens (Human) protein is Very long chain fatty acid elongase 3.